A 299-amino-acid chain; its full sequence is MPSPSYLGRFAPSPTGPLHFGSLLAAFGSWLLARHAGGQWCVRIEDIDPPRAEPGASERQLRTLTAFGLHSDLPVIRQSERDAAYTAAINRLLETGQAFECSCSRADLAGMGGIHHACVAPLGARRAVRLRVPPQSPVGFDDALHGRVLQDVYADVGDVVLRRADGYWAYQLAVVVDDAAQGITDVVRGADLLDSTPRQMLLQRALGVPQPRYLHLPLMLDGDGRKLSKSHGAPALDDTDPLPALHAAWAGLGQRPDALPRRATVTTLLQQAVRHFSPQLLPRQRQRDRATCAYERQRD.

Residues 9-13 (RFAPS) and glutamate 45 each bind L-glutamate. The 'HIGH' region motif lies at 12 to 22 (PSPTGPLHFGS). Zn(2+) is bound by residues cysteine 101, cysteine 103, and cysteine 118. L-glutamate is bound by residues tyrosine 170 and arginine 188. A 'KMSKS' region motif is present at residues 226–230 (KLSKS). Lysine 229 contacts ATP. The tract at residues 279-299 (QLLPRQRQRDRATCAYERQRD) is disordered. The segment covering 285–299 (RQRDRATCAYERQRD) has biased composition (basic and acidic residues).

This sequence belongs to the class-I aminoacyl-tRNA synthetase family. GluQ subfamily. It depends on Zn(2+) as a cofactor.

Its function is as follows. Catalyzes the tRNA-independent activation of glutamate in presence of ATP and the subsequent transfer of glutamate onto a tRNA(Asp). Glutamate is transferred on the 2-amino-5-(4,5-dihydroxy-2-cyclopenten-1-yl) moiety of the queuosine in the wobble position of the QUC anticodon. The sequence is that of Glutamyl-Q tRNA(Asp) synthetase from Xanthomonas oryzae pv. oryzae (strain KACC10331 / KXO85).